The sequence spans 2595 residues: Glucosylceramide transporter ABCA12 (2595 aa).

A helical transmembrane segment spans residues 23–43 (PLWTLVLILWPVIIFIILAIT). The span at 109–119 (LKKPSNPKRDS) shows a compositional bias: basic and acidic residues. Residues 109-143 (LKKPSNPKRDSNLSLRSTQVPERSHTSLATVPPRP) form a disordered region. N-linked (GlcNAc...) asparagine glycosylation is found at Asn-120, Asn-156, Asn-174, Asn-214, Asn-275, Asn-331, Asn-365, Asn-381, Asn-410, Asn-433, Asn-455, Asn-526, Asn-541, Asn-574, Asn-605, Asn-645, Asn-749, Asn-773, Asn-812, Asn-823, Asn-854, Asn-917, and Asn-960. The segment covering 120-137 (NLSLRSTQVPERSHTSLA) has biased composition (polar residues). Transmembrane regions (helical) follow at residues 1062-1082 (VSYSLPIVLMVAWVVFIAAFV), 1109-1129 (FAWLIESIGFLLVTIAILIVI), and 1142-1162 (FILFLYFSDYSFSVIAMSYLI). A glycan (N-linked (GlcNAc...) asparagine) is linked at Asn-1167. A run of 3 helical transmembrane segments spans residues 1171-1191 (IAALIGSLIYVIAFFPFIVLV), 1197-1217 (LSYVIKVFMSLLSPTAFSYAS), and 1247-1267 (FGWLCCLILADSFIYFFIAWY). Asn-1319 is a glycosylation site (N-linked (GlcNAc...) asparagine). In terms of domain architecture, ABC transporter 1 spans 1346–1577 (VALHGVTKIY…FGDGYHLTLT (232 aa)). Residue 1378–1385 (GPNGAGKT) participates in ATP binding. Residues Asn-1524, Asn-1663, Asn-1673, Asn-1686, Asn-1690, and Asn-1704 are each glycosylated (N-linked (GlcNAc...) asparagine). The segment at 1672–1703 (SNMSLEHLTQRKVGNPSANGTSTPDDLSVSSS) is disordered. Residues 1687–1703 (PSANGTSTPDDLSVSSS) show a composition bias toward polar residues. The chain crosses the membrane as a helical span at residues 1747 to 1767 (LIAQVILPIVFVATAMGLGTL). N-linked (GlcNAc...) asparagine glycosylation is found at Asn-1819, Asn-1835, Asn-1876, Asn-1921, and Asn-1952. Transmembrane regions (helical) follow at residues 1979–1999 (ATISSLIDILVALSILMGYSV), 2035–2055 (FIYDMVFYLVPVAFSIGVIAI), 2072–2092 (LLLLLFGYATFSWMYLLAGLF), 2103–2123 (VCVNLFFGINSIVSLSVVYFL), 2143–2163 (IFLIFPQFCFGYGLIELSQQQ), 2187–2207 (GAMFVALVSQGTMFFLLRLLI), and 2270–2290 (IIAVNNISLGIPAGECFGLLG). Residues 2254–2489 (VQLHRLTKTY…FGRGFTVKVH (236 aa)) form the ABC transporter 2 domain. 2290–2297 (GVNGAGKT) contacts ATP. Asn-2318, Asn-2542, and Asn-2547 each carry an N-linked (GlcNAc...) asparagine glycan. A compositionally biased stretch (polar residues) spans 2575–2587 (VDTSSQGSTISVD). The interval 2575–2595 (VDTSSQGSTISVDSQEDQLDS) is disordered.

The protein belongs to the ABC transporter superfamily. ABCA family. Interacts with NR1H2 and ABCA1; this interaction is required for ABCA1 localization to the cell surface and is necessary for its normal activity and stability. Expressed in a number of other tissues besides skin, including heart, intestine, stomach, and kidney. Expressed mainly in the granular layer of the skin. Expressed in lung. Expressed in alpha and beta cells of pancreatic islets.

The protein resides in the cytoplasmic vesicle. Its subcellular location is the secretory vesicle membrane. It localises to the golgi apparatus membrane. The catalysed reaction is ATP + H2O + phospholipidSide 1 = ADP + phosphate + phospholipidSide 2.. The enzyme catalyses a beta-D-glucosylceramide(in) + ATP + H2O = a beta-D-glucosylceramide(out) + ADP + phosphate + H(+). Functionally, transports lipids such as glucosylceramides from the outer to the inner leaflet of lamellar granules (LGs) membrane, whereby the lipids are finally transported to the keratinocyte periphery via the trans-Golgi network and LGs and released to the apical surface of the granular keratinocytes to form lipid lamellae in the stratum corneum of the epidermis, which is essential for skin barrier function. In the meantime, participates in the transport of the lamellar granules-associated proteolytic enzymes, in turn regulates desquamation and keratinocyte differentiation. Furthermore, is essential for the regulation of cellular cholesterol homeostasis by regulating ABCA1-dependent cholesterol efflux from macrophages through interaction with NR1H2 and ABCA1. Plays pleiotropic roles in regulating glucose stimulated insulin secretion from beta cells, regulating the morphology and fusion of insulin granules, lipid raft abundance and the actin cytoskeleton. Also involved in lung surfactant biogenesis. The sequence is that of Glucosylceramide transporter ABCA12 from Mus musculus (Mouse).